The primary structure comprises 495 residues: Probable aminotransferase ACS12 (495 aa).

Lys334 carries the N6-(pyridoxal phosphate)lysine modification.

It belongs to the class-I pyridoxal-phosphate-dependent aminotransferase family. In terms of assembly, homodimer. Pyridoxal 5'-phosphate serves as cofactor. As to expression, expressed in roots. Expressed at low level in leaves, stems, flowers and siliques.

In terms of biological role, probable aminotransferase. Does not have 1-aminocyclopropane-1-carboxylate synthase (ACS) activity, suggesting that it is not involved in ethylene biosynthesis. This Arabidopsis thaliana (Mouse-ear cress) protein is Probable aminotransferase ACS12 (ACS12).